The primary structure comprises 317 residues: Methionyl-tRNA formyltransferase (317 aa).

112 to 115 provides a ligand contact to (6S)-5,6,7,8-tetrahydrofolate; the sequence is SLLP.

Belongs to the Fmt family.

The enzyme catalyses L-methionyl-tRNA(fMet) + (6R)-10-formyltetrahydrofolate = N-formyl-L-methionyl-tRNA(fMet) + (6S)-5,6,7,8-tetrahydrofolate + H(+). Functionally, attaches a formyl group to the free amino group of methionyl-tRNA(fMet). The formyl group appears to play a dual role in the initiator identity of N-formylmethionyl-tRNA by promoting its recognition by IF2 and preventing the misappropriation of this tRNA by the elongation apparatus. The protein is Methionyl-tRNA formyltransferase of Mesorhizobium japonicum (strain LMG 29417 / CECT 9101 / MAFF 303099) (Mesorhizobium loti (strain MAFF 303099)).